A 257-amino-acid chain; its full sequence is Imidazole glycerol phosphate synthase subunit HisF (257 aa).

Active-site residues include Asp12 and Asp131.

This sequence belongs to the HisA/HisF family. In terms of assembly, heterodimer of HisH and HisF.

Its subcellular location is the cytoplasm. It carries out the reaction 5-[(5-phospho-1-deoxy-D-ribulos-1-ylimino)methylamino]-1-(5-phospho-beta-D-ribosyl)imidazole-4-carboxamide + L-glutamine = D-erythro-1-(imidazol-4-yl)glycerol 3-phosphate + 5-amino-1-(5-phospho-beta-D-ribosyl)imidazole-4-carboxamide + L-glutamate + H(+). Its pathway is amino-acid biosynthesis; L-histidine biosynthesis; L-histidine from 5-phospho-alpha-D-ribose 1-diphosphate: step 5/9. In terms of biological role, IGPS catalyzes the conversion of PRFAR and glutamine to IGP, AICAR and glutamate. The HisF subunit catalyzes the cyclization activity that produces IGP and AICAR from PRFAR using the ammonia provided by the HisH subunit. The sequence is that of Imidazole glycerol phosphate synthase subunit HisF from Kineococcus radiotolerans (strain ATCC BAA-149 / DSM 14245 / SRS30216).